A 309-amino-acid chain; its full sequence is HPr kinase/phosphorylase (309 aa).

Active-site residues include His-138 and Lys-159. Residue Gly-153–Ser-160 participates in ATP binding. Residue Ser-160 coordinates Mg(2+). The active-site Proton acceptor; for phosphorylation activity. Proton donor; for dephosphorylation activity is the Asp-177. An important for the catalytic mechanism of both phosphorylation and dephosphorylation region spans residues Leu-201 to Asn-210. A Mg(2+)-binding site is contributed by Glu-202. Arg-243 is a catalytic residue. The interval Pro-264–Arg-269 is important for the catalytic mechanism of dephosphorylation.

Belongs to the HPrK/P family. Homohexamer. Mg(2+) serves as cofactor.

It carries out the reaction [HPr protein]-L-serine + ATP = [HPr protein]-O-phospho-L-serine + ADP + H(+). The enzyme catalyses [HPr protein]-O-phospho-L-serine + phosphate + H(+) = [HPr protein]-L-serine + diphosphate. Catalyzes the ATP- as well as the pyrophosphate-dependent phosphorylation of a specific serine residue in HPr, a phosphocarrier protein of the phosphoenolpyruvate-dependent sugar phosphotransferase system (PTS). HprK/P also catalyzes the pyrophosphate-producing, inorganic phosphate-dependent dephosphorylation (phosphorolysis) of seryl-phosphorylated HPr (P-Ser-HPr). The two antagonistic activities of HprK/P are regulated by several intracellular metabolites, which change their concentration in response to the absence or presence of rapidly metabolisable carbon sources (glucose, fructose, etc.) in the growth medium. Also phosphorylates/dephosphorylates the HPr-like catabolite repression protein crh on a specific serine residue. Therefore, by controlling the phosphorylation state of HPr and crh, HPrK/P is a sensor enzyme that plays a major role in the regulation of carbon metabolism and sugar transport: it mediates carbon catabolite repression (CCR), and regulates PTS-catalyzed carbohydrate uptake and inducer exclusion. The sequence is that of HPr kinase/phosphorylase from Bacillus mycoides (strain KBAB4) (Bacillus weihenstephanensis).